We begin with the raw amino-acid sequence, 372 residues long: uncharacterized protein (372 aa).

An N-terminal signal peptide occupies residues Met1 to Ser19. An N-linked (GlcNAc...) asparagine glycan is attached at Asn18. Positions Ser20–Ile160 constitute an MRH domain. Cys22 and Cys58 form a disulfide bridge. Asn59 carries an N-linked (GlcNAc...) asparagine glycan. Residues Cys128 and Cys158 are joined by a disulfide bond. A coiled-coil region spans residues Asn185–Ile282. The interval Lys201–Asn233 is disordered. The segment covering Asn206–Asn230 has biased composition (low complexity).

The protein localises to the secreted. This is an uncharacterized protein from Dictyostelium discoideum (Social amoeba).